A 394-amino-acid polypeptide reads, in one-letter code: Probable sugar efflux transporter (394 aa).

12 helical membrane-spanning segments follow: residues 15 to 35 (VLMLAIAAFIFNTTEFVPVGL), 50 to 70 (VGLMLTIYAWVVALMSLPMML), 79 to 99 (MLLMIIFVMFVASHALSSVAW), 109 to 129 (IGIALSHAIFWSITASLAIRV), 137 to 157 (QALSMMATGTALAMVLGLPIG), 168 to 188 (ITFAVIGAVAFVTMLLLLKLL), 209 to 229 (PALVALYLLIAITVTAHYTAY), 249 to 269 (FLLLIFGAAGIVGSVLFSIYG), 272 to 292 (FPATFLLAAIGLITLSMMCLY), 299 to 319 (LAVSTLCVIWGIAVMVMGLAV), 333 to 353 (VAMSLLSGIYNIGIGAGALLG), and 362 to 382 (MASVGYVGGAIGILSLLWCAW).

This sequence belongs to the major facilitator superfamily. SotB (TC 2.A.1.2) family.

Its subcellular location is the cell inner membrane. Its function is as follows. Involved in the efflux of sugars. The physiological role may be the reduction of the intracellular concentration of toxic sugars or sugar metabolites. This chain is Probable sugar efflux transporter, found in Erwinia tasmaniensis (strain DSM 17950 / CFBP 7177 / CIP 109463 / NCPPB 4357 / Et1/99).